The sequence spans 1906 residues: Myosin light chain kinase, smooth muscle (1906 aa).

Ig-like C2-type domains lie at 28 to 117 and 156 to 244; these read PAFT…VELT and PKFA…AELT. Disordered regions lie at residues 127 to 157 and 309 to 453; these read SLPS…SPPK and ETFY…SKVS. A compositionally biased stretch (basic and acidic residues) spans 309-321; sequence ETFYTSREAKDGK. 2 stretches are compositionally biased toward polar residues: residues 345–354 and 384–402; these read LQKTSSTITL and PLMT…QVSP. Residues 403–424 show a composition bias toward basic and acidic residues; it reads RSRETENRAGVRKSVKEEKREP. 4 Ig-like C2-type domains span residues 429 to 517, 521 to 613, 637 to 725, and 735 to 830; these read PQFE…WLLT, PKVE…AQVT, PIFL…ATLT, and PWFI…SSAS. The IIA-1 repeat unit spans residues 660–676; it reads VSANPCPEIIWLHNGKE. The tract at residues 660–1833 is 4 X repeats, motif IIA; it reads VSANPCPEII…EVMWYKDDQP (1174 aa). Residues 693-708 form an IIB-1 repeat; the sequence is SLYIQEVFPEDTGKYT. A 5 X repeats, motif IIB region spans residues 693-1866; sequence SLYIQEVFPE…VCGDDDAKYT (1174 aa). Residues 758–774 form an IIA-2 repeat; sequence IAGDPFPTVHWFKDGQE. Residues 791–807 form an IIB-2 repeat; sequence TLILRNVQSRHAGQYEI. Disordered stretches follow at residues 831–881 and 947–1086; these read RAEM…QEDV and PKTL…APSF. 2 stretches are compositionally biased toward basic and acidic residues: residues 833–850 and 867–881; these read EMLR…RRDG and SSSE…QEDV. Residues 970-987 form an III-1 repeat; it reads AKKGTPKTPLPEKVPPPK. The segment at 970–1226 is 4 X repeats, motif III; that stretch reads AKKGTPKTPL…TPPKAATPPQ (257 aa). Residues 977 to 988 show a composition bias toward pro residues; sequence TPLPEKVPPPKP. One copy of the III-2 repeat lies at 999–1016; the sequence is AKKKPPAENGSASTPAPN. A compositionally biased stretch (basic and acidic residues) spans 1039 to 1051; it reads VKKEEKNDRKCEH. The stretch at 1061-1078 is one III-3 repeat; that stretch reads IGKKAENKPAASKPTPPP. Ig-like C2-type domains follow at residues 1084 to 1172 and 1225 to 1313; these read PSFT…CKVL and PQIT…VNLT. Residues 1107 to 1123 form an IIA-3 repeat; sequence ISSDPPASVSWTLDSKA. An IIB-3 repeat occupies 1140-1156; sequence SLTIEKVMPEDGGEYKC. The disordered stretch occupies residues 1180 to 1227; sequence KAAKPAEKKTKKPKTTLPPVLSTESSEATVKKKPAPKTPPKAATPPQI. The stretch at 1209-1226 is one III-4 repeat; it reads VKKKPAPKTPPKAATPPQ. One copy of the IIB-4 repeat lies at 1281–1297; that stretch reads KLTISSTKQEHCGCYTL. A motif IA region spans residues 1317-1364; the sequence is KPDPPAGTPCASDIRSSSLTLSWYGSSYDGGSAVQSYTVEIWNSVDNK. The 94-residue stretch at 1321 to 1414 folds into the Fibronectin type-III domain; it reads PAGTPCASDI…ESEVVKVGEK (94 aa). Residues 1385 to 1402 form a motif IB region; it reads REYKFRVRAANVYGISEP. The interval 1414-1433 is disordered; sequence KQEEELKEEEAELSDDEGKE. The span at 1415-1432 shows a compositional bias: acidic residues; the sequence is QEEELKEEEAELSDDEGK. The region spanning 1453-1708 is the Protein kinase domain; sequence YNIEERLGSG…CTQCLQHPWL (256 aa). Residues 1459–1467 and lysine 1482 contribute to the ATP site; that span reads LGSGKFGQV. The active-site Proton acceptor is aspartate 1574. A calmodulin-binding region spans residues 1700–1763; the sequence is TQCLQHPWLQ…SGMSGRKASG (64 aa). Positions 1716-1728 are calmodulin autoinhibition (AM13) region; the sequence is EAKKLSKDRMKKY. Residues 1730-1749 form a calmodulin recognition (RS20) region region; sequence ARRKWQKTGHAVRAIGRLSS. Residue serine 1762 is modified to Phosphoserine; by PKG. At serine 1768 the chain carries Phosphoserine; by MAPK. The Ig-like C2-type 9 domain maps to 1794–1885; sequence PYFTKTILDM…ATCTAELLVE (92 aa). An IIA-4 repeat occupies 1817–1833; it reads IEGYPDPEVMWYKDDQP. The stretch at 1851-1866 is one IIB-5 repeat; that stretch reads SLTISEVCGDDDAKYT. The interval 1885-1906 is disordered; it reads ETMGKEGEGEGEGEEDEEEEEE. Over residues 1893–1906 the composition is skewed to acidic residues; the sequence is GEGEGEEDEEEEEE.

This sequence belongs to the protein kinase superfamily. CAMK Ser/Thr protein kinase family. As to quaternary structure, all isoforms including Telokin bind calmodulin. Requires Mg(2+) as cofactor. Ca(2+) serves as cofactor. In terms of processing, the C-terminus is deglutamylated, leading to the formation of Myosin light chain kinase, smooth muscle, deglutamylated form. The C-terminus is variable, with one to five C-terminal glutamyl residues being removed producing five forms differring in their number of C-terminal glutamyl residues. Acetylated. Post-translationally, phosphorylation of telokin by PKG has no significant effect on its myosin binding activity, but promotes translocation to the membrane. As to expression, isoform telokin is expressed in gizzard, heart, lung, intestine, and skeletal muscle although the levels of the expression in the latter were much less than that in the gizzard.

The protein resides in the cytoplasm. It is found in the cytosol. The protein localises to the membrane. It catalyses the reaction L-seryl-[myosin light chain] + ATP = O-phospho-L-seryl-[myosin light chain] + ADP + H(+). It carries out the reaction L-threonyl-[myosin light chain] + ATP = O-phospho-L-threonyl-[myosin light chain] + ADP + H(+). Its activity is regulated as follows. Activated by phosphorylation on Tyr-478. Isoforms which lack this tyrosine residue are not regulated in this way. All catalytically active isoforms require binding to calcium and calmodulin for activation. Its function is as follows. Phosphorylates a specific serine in the N-terminus of a myosin light chain, which leads to the formation of calmodulin/MLCK signal transduction complexes which allow selective transduction of calcium signals. This chain is Myosin light chain kinase, smooth muscle (Mylk), found in Gallus gallus (Chicken).